The following is a 501-amino-acid chain: Probable cysteine desulfurase, mitochondrial (501 aa).

Residues 172–173 (AT), Asn-252, Gln-280, and 300–302 (SAH) contribute to the pyridoxal 5'-phosphate site. Lys-303 bears the N6-(pyridoxal phosphate)lysine mark. Residue Thr-340 participates in pyridoxal 5'-phosphate binding. Catalysis depends on Cys-425, which acts as the Cysteine persulfide intermediate. [2Fe-2S] cluster is bound at residue Cys-425.

This sequence belongs to the class-V pyridoxal-phosphate-dependent aminotransferase family. NifS/IscS subfamily. It depends on pyridoxal 5'-phosphate as a cofactor.

The protein resides in the mitochondrion. It catalyses the reaction (sulfur carrier)-H + L-cysteine = (sulfur carrier)-SH + L-alanine. In terms of biological role, catalyzes the removal of elemental sulfur from cysteine to produce alanine. It supplies the inorganic sulfur for iron-sulfur (Fe-S) clusters. Plays a role in both tRNA-processing and mitochondrial metabolism. Involved in the 2-thio-modification of both 5-carboxymethylaminomethyl-2-thiouridine in mitochondrial tRNAs and 5-methoxycarbonylmethyl-2-thiouridine (mcm5s2U) in cytoplasmic tRNAs. This is Probable cysteine desulfurase, mitochondrial from Schizosaccharomyces pombe (strain 972 / ATCC 24843) (Fission yeast).